We begin with the raw amino-acid sequence, 250 residues long: Kv channel-interacting protein 4 (250 aa).

A KIS region spans residues 2–44; it reads NVRRVESISAQLEEASSTGGFLYTQNSTKRSIKERLMKLLPCS. S17 and S56 each carry phosphoserine. The EF-hand 1; degenerate domain occupies 61-117; it reads LEMATVRHRPEALELLEAQSKFTKKELQILYRGFKNECPSGVVNEDTFKEIYSQFFP. EF-hand domains follow at residues 120-155, 156-191, and 204-239; these read DSTT…LLRG, TVQE…IYDM, and APRQ…DENI. Residues D133, D135, N137, D144, D169, N171, D173, Y175, E180, D217, N219, D221, and E228 each coordinate Ca(2+). An interaction with KCND2 region spans residues 237 to 250; it reads ENIMRSMQLFENVI.

Belongs to the recoverin family. In terms of assembly, component of heteromultimeric potassium channels. Identified in potassium channel complexes containing KCND1, KCND2, KCND3, KCNIP1, KCNIP2, KCNIP3, KCNIP4, DPP6 and DPP10. Interacts with KCND2. Interacts with KCND3. Interacts with the C-terminus of PSEN2 and probably PSEN1.

The protein resides in the cell membrane. It localises to the cytoplasm. The protein localises to the peroxisome. In terms of biological role, regulatory subunit of Kv4/D (Shal)-type voltage-gated rapidly inactivating A-type potassium channels. Modulates KCND2 channel density, inactivation kinetics and rate of recovery from inactivation in a calcium-dependent and isoform-specific manner. Modulates KCND3/Kv4.3 currents. Isoform 4 does not increase KCND2 expression at the cell membrane. Isoform 4 retains KCND3 in the endoplasmic reticulum and negatively regulates its expression at the cell membrane. The protein is Kv channel-interacting protein 4 (KCNIP4) of Bos taurus (Bovine).